We begin with the raw amino-acid sequence, 80 residues long: Dermaseptin-A5 (80 aa).

Residues 1 to 22 (MAFLKKSLFLVLFLGLVSLSIC) form the signal peptide. A propeptide spanning residues 23–43 (EEEKRENEDEEEQEDDEQSEM) is cleaved from the precursor. Residues 24-45 (EEKRENEDEEEQEDDEQSEMKR) form a disordered region. Over residues 30–40 (EDEEEQEDDEQ) the composition is skewed to acidic residues. At V77 the chain carries Valine amide. A propeptide spanning residues 79–80 (EQ) is cleaved from the precursor.

It belongs to the frog skin active peptide (FSAP) family. Dermaseptin subfamily. In terms of tissue distribution, expressed by the skin glands.

It is found in the secreted. In terms of biological role, possesses a potent antimicrobial activity against Gram-positive and Gram-negative bacteria. Probably acts by disturbing membrane functions with its amphipathic structure. The polypeptide is Dermaseptin-A5 (Agalychnis annae (Blue-sided leaf frog)).